The primary structure comprises 257 residues: UPF0246 protein BF3795 (257 aa).

Belongs to the UPF0246 family.

This Bacteroides fragilis (strain ATCC 25285 / DSM 2151 / CCUG 4856 / JCM 11019 / LMG 10263 / NCTC 9343 / Onslow / VPI 2553 / EN-2) protein is UPF0246 protein BF3795.